Consider the following 575-residue polypeptide: Potassium-transporting ATPase potassium-binding subunit (575 aa).

12 helical membrane-spanning segments follow: residues 3 to 23, 69 to 89, 136 to 156, 178 to 198, 266 to 286, 293 to 313, 340 to 360, 367 to 387, 391 to 411, 431 to 451, 498 to 518, and 543 to 563; these read FEGV…VPFF, AVLA…LLQG, CFQF…IAFI, ILMP…VPQS, LLEI…FGVL, GWVL…VAAL, FGWA…TGAV, LTPL…IWGG, GIAY…LMVG, IIFL…LAIP, VVLL…AGGL, and AGTI…LGPI.

Belongs to the KdpA family. As to quaternary structure, the system is composed of three essential subunits: KdpA, KdpB and KdpC.

It is found in the cell inner membrane. Its function is as follows. Part of the high-affinity ATP-driven potassium transport (or Kdp) system, which catalyzes the hydrolysis of ATP coupled with the electrogenic transport of potassium into the cytoplasm. This subunit binds the periplasmic potassium ions and delivers the ions to the membrane domain of KdpB through an intramembrane tunnel. The chain is Potassium-transporting ATPase potassium-binding subunit from Gloeobacter violaceus (strain ATCC 29082 / PCC 7421).